Consider the following 269-residue polypeptide: Chromosome-partitioning protein Spo0J (269 aa).

The stimulates ATPase activity of Soj by 8% stretch occupies residues 1–20 (MSRKPSGLGRGLEALLPKTG). The segment at residues 137-156 (QEEVARRVGKARSTVANALR) is a DNA-binding region (H-T-H motif). Residues 223-269 (PSPLSLELSRHLGLPVRVVGGKKGKVVIQYRSLEELEALLRRLGYQA) are required for DNA-binding; may be responsible for dimerization.

Belongs to the ParB family. In terms of assembly, homodimer, probably via the C-terminal 46 residues. Dimerization of the N-terminal H-T-H region may require DNA-binding. Probably interacts with ATPase Soj.

Functionally, probably involved in chromosome partitioning. Binds to a plasmid centromere-like site parS. Stimulates the ATPase activity 10-fold of Soj; the first 20 residues may be responsible. The chain is Chromosome-partitioning protein Spo0J (spo0C) from Thermus thermophilus (strain ATCC BAA-163 / DSM 7039 / HB27).